A 116-amino-acid polypeptide reads, in one-letter code: Large ribosomal subunit protein bL20 (116 aa).

It belongs to the bacterial ribosomal protein bL20 family.

In terms of biological role, binds directly to 23S ribosomal RNA and is necessary for the in vitro assembly process of the 50S ribosomal subunit. It is not involved in the protein synthesizing functions of that subunit. In Nitratiruptor sp. (strain SB155-2), this protein is Large ribosomal subunit protein bL20.